An 828-amino-acid chain; its full sequence is Periplasmic nitrate reductase (828 aa).

A signal peptide (tat-type signal) is located at residues 1-31; sequence MKLSRRSFMKANAVAAAAAAAGLSVPGVARA. The 4Fe-4S Mo/W bis-MGD-type domain occupies 39–95; the sequence is IKWDKAPCRFCGTGCGVLVGTQQGRVVACQGDPDAPVNRGLNCIKGYFLPKIMYGKD. The [4Fe-4S] cluster site is built by C46, C49, C53, and C81. Residues K83, Q150, N175, C179, 212–219, 243–247, 262–264, M372, Q376, N482, 508–509, K531, D558, and 718–727 each bind Mo-bis(molybdopterin guanine dinucleotide); these read WGANMAEM, STYQH, QSD, SD, and TGRVLEHWHT. F794 contacts substrate. The Mo-bis(molybdopterin guanine dinucleotide) site is built by N802 and K819.

The protein belongs to the prokaryotic molybdopterin-containing oxidoreductase family. NasA/NapA/NarB subfamily. In terms of assembly, component of the periplasmic nitrate reductase NapAB complex composed of NapA and NapB. The cofactor is [4Fe-4S] cluster. Requires Mo-bis(molybdopterin guanine dinucleotide) as cofactor. In terms of processing, predicted to be exported by the Tat system. The position of the signal peptide cleavage has not been experimentally proven.

The protein resides in the periplasm. It carries out the reaction 2 Fe(II)-[cytochrome] + nitrate + 2 H(+) = 2 Fe(III)-[cytochrome] + nitrite + H2O. Catalytic subunit of the periplasmic nitrate reductase complex NapAB. Receives electrons from NapB and catalyzes the reduction of nitrate to nitrite. The protein is Periplasmic nitrate reductase of Shigella flexneri serotype 5b (strain 8401).